The following is a 264-amino-acid chain: Glutamate 5-kinase (264 aa).

An ATP-binding site is contributed by Lys15. Residues Ser55, Asp142, and Asn154 each coordinate substrate. ATP is bound by residues 174–175 (SD) and 216–222 (TGGIATK).

Belongs to the glutamate 5-kinase family.

It localises to the cytoplasm. The enzyme catalyses L-glutamate + ATP = L-glutamyl 5-phosphate + ADP. The protein operates within amino-acid biosynthesis; L-proline biosynthesis; L-glutamate 5-semialdehyde from L-glutamate: step 1/2. Catalyzes the transfer of a phosphate group to glutamate to form L-glutamate 5-phosphate. This chain is Glutamate 5-kinase, found in Alkaliphilus metalliredigens (strain QYMF).